The chain runs to 1254 residues: Vitamin B12-dependent ribonucleotide reductase (1254 aa).

Residues Ser153, 198–199 (AC), Gly230, 474–478 (NPCSE), and 675–679 (PTGTI) each bind substrate. Cys199 and Cys487 are oxidised to a cystine. The active-site Proton acceptor is the Asn474. Cys476 serves as the catalytic Cysteine radical intermediate. Glu478 acts as the Proton acceptor in catalysis.

This sequence belongs to the ribonucleoside diphosphate reductase class-2 family. Requires adenosylcob(III)alamin as cofactor.

The catalysed reaction is a 2'-deoxyribonucleoside 5'-diphosphate + [thioredoxin]-disulfide + H2O = a ribonucleoside 5'-diphosphate + [thioredoxin]-dithiol. Its function is as follows. Catalyzes the reduction of ribonucleotides to deoxyribonucleotides. May function to provide a pool of deoxyribonucleotide precursors for DNA repair during oxygen limitation and/or for immediate growth after restoration of oxygen. The chain is Vitamin B12-dependent ribonucleotide reductase (nrdJ) from Bradyrhizobium diazoefficiens (strain JCM 10833 / BCRC 13528 / IAM 13628 / NBRC 14792 / USDA 110).